The sequence spans 92 residues: Calitoxin (92 aa).

An N-terminal signal peptide occupies residues 1-20 (MKTQVLVVLVLCVVFCLAES). The propeptide occupies 21–42 (RNSMTSEERGLVSLMRQRDDIA). Cystine bridges form between C47–C86, C49–C77, and C67–C87.

It belongs to the sea anemone sodium channel inhibitory toxin family. Expressed both outside and in acontia, a specialised envenomation structure laden with batteries of venom-containing nematocysts found only in the superfamily Metridioidea.

Its subcellular location is the secreted. It is found in the nematocyst. In terms of biological role, in neuromuscular preparation of crustaceans, the toxin increased neurotransmitter release, causing repetitive firing of the axons. May affect sodium channels (Nav). This chain is Calitoxin, found in Calliactis polypus (Hermit crab anemone).